Reading from the N-terminus, the 374-residue chain is tRNA (guanine(26)-N(2))-dimethyltransferase (374 aa).

Positions 4 to 371 (IEIREGKASL…KEIDEIVNCI (368 aa)) constitute a Trm1 methyltransferase domain. Residues R44, R69, D87, D113, and A114 each contribute to the S-adenosyl-L-methionine site. Zn(2+) contacts are provided by C244, C247, C261, and C264.

It belongs to the class I-like SAM-binding methyltransferase superfamily. Trm1 family.

The catalysed reaction is guanosine(26) in tRNA + 2 S-adenosyl-L-methionine = N(2)-dimethylguanosine(26) in tRNA + 2 S-adenosyl-L-homocysteine + 2 H(+). In terms of biological role, dimethylates a single guanine residue at position 26 of a number of tRNAs using S-adenosyl-L-methionine as donor of the methyl groups. This chain is tRNA (guanine(26)-N(2))-dimethyltransferase, found in Sulfurisphaera tokodaii (strain DSM 16993 / JCM 10545 / NBRC 100140 / 7) (Sulfolobus tokodaii).